Consider the following 1115-residue polypeptide: Neural cell adhesion molecule 1 (1115 aa).

The signal sequence occupies residues 1 to 19 (MLRTKDLIWTLFFLGTAVS). 5 Ig-like C2-type domains span residues 20-111 (LQVD…ATVN), 116-205 (QKLM…KDIQ), 212-302 (PTVQ…ASIH), 309-402 (PKIT…MYLE), and 407-492 (PKLQ…ESLE). Residues 20–711 (LQVDIVPSQG…NGSPTAGLST (692 aa)) lie on the Extracellular side of the membrane. Intrachain disulfides connect Cys41/Cys96 and Cys139/Cys189. Heparin-binding positions include 152–156 (KHKGR) and 161–165 (KKDVR). Asn222 carries an N-linked (GlcNAc...) asparagine; partial glycan. Cysteines 235 and 288 form a disulfide. Asn316, Asn348, Asn424, Asn450, and Asn479 each carry an N-linked (GlcNAc...) asparagine glycan. Cys330 and Cys386 form a disulfide bridge. Cys427 and Cys480 are joined by a disulfide. Fibronectin type-III domains follow at residues 500–599 (TPSS…TQPV) and 601–696 (EPSA…SAQP). Thr706 carries the GPI-anchor amidated serine lipid modification. Residues 712–729 (GAIVGILIVIFVLLLVVM) form a helical membrane-spanning segment. Residues 730 to 1115 (DITCYFLNKC…TQTKENESKA (386 aa)) are Cytoplasmic-facing. 3 disordered regions span residues 756–809 (GAKG…TEPE), 839–912 (FATA…SASN), and 924–1115 (VLSP…ESKA). Positions 758 to 799 (KGKDMEEGKAAFSKDESKEPIVEVRTEEERTPNHDGGKHTEP) are enriched in basic and acidic residues. A phosphoserine mark is found at Ser770 and Ser774. Composition is skewed to low complexity over residues 800 to 809 (NETTPLTEPE), 845 to 856 (SPTSETTTLTSS), and 876 to 896 (TPSK…KVAP). Phosphoserine occurs at positions 887 and 890. Composition is skewed to polar residues over residues 902–912 (DTPTSAPSASN) and 926–935 (SPSTPASAGE). The residue at position 926 (Ser926) is a Phosphoserine. Position 929 is a phosphothreonine (Thr929). Composition is skewed to low complexity over residues 936 to 974 (TSKA…PQAK) and 999 to 1012 (AATA…KAAT). Ser946 and Ser958 each carry phosphoserine. The residue at position 1001 (Thr1001) is a Phosphothreonine. Ser1005 is modified (phosphoserine). Composition is skewed to basic and acidic residues over residues 1019-1037 (EDLK…DLAK) and 1074-1091 (KTEK…ESEA). Thr1030 is modified (phosphothreonine).

In terms of assembly, interacts with MDK. Found in a complex with SLC39A6, SLC39A10 and with NCAM1; this complex controls NCAM1 phosphorylation and integration into focal adhesion complexes during epithelial-tomesenchymal transition. Interacts with synaptic plasticity regulator PANTS. In terms of processing, polysialylated by ST8SIA2 and ST8SIA4. Polysialylation modulates cell interactions by confering both attractive and repulsive properties that are highly regulated by ST8SIA2 and ST8SIA4. Polysialylation is formed on a-2,3-linked sialic acid of core glycans.

It is found in the cell membrane. In terms of biological role, this protein is a cell adhesion molecule involved in neuron-neuron adhesion, neurite fasciculation, outgrowth of neurites, etc. This chain is Neural cell adhesion molecule 1, found in Mus musculus (Mouse).